A 459-amino-acid chain; its full sequence is U-box domain-containing protein 75 (459 aa).

One can recognise a U-box domain in the interval 64–138; it reads AVPAVFICPI…AAWFSRRYTR (75 aa). ARM repeat units follow at residues 188-229 and 231-270; these read QSVT…GVPL and ADAK…ILME.

In terms of assembly, interacts with GPA1. As to expression, expressed highly in panicles at flowering time, at moderate levels in vegetative shoot apices, leaf sheaths, leaf blades, and elongating internodes, and at low levels in roots.

The protein localises to the cell membrane. The enzyme catalyses S-ubiquitinyl-[E2 ubiquitin-conjugating enzyme]-L-cysteine + [acceptor protein]-L-lysine = [E2 ubiquitin-conjugating enzyme]-L-cysteine + N(6)-ubiquitinyl-[acceptor protein]-L-lysine.. It participates in protein modification; protein ubiquitination. Its function is as follows. E3 ubiquitin ligase that may function as positive regulator of brassinosteroid (BR) signaling. Possesses E3 ubiquitin ligase in vitro. Acts together with the heterotrimeric G alpha subunit GPA1 at the plasma membrane to mediate a BR signaling pathway that affects plant growth and development. Does not seem to be involved in gibberellin or cytokinin responses. This is U-box domain-containing protein 75 from Oryza sativa subsp. japonica (Rice).